Here is a 249-residue protein sequence, read N- to C-terminus: Segregation and condensation protein A (249 aa).

The protein belongs to the ScpA family. Component of a cohesin-like complex composed of ScpA, ScpB and the Smc homodimer, in which ScpA and ScpB bind to the head domain of Smc. The presence of the three proteins is required for the association of the complex with DNA.

The protein resides in the cytoplasm. Functionally, participates in chromosomal partition during cell division. May act via the formation of a condensin-like complex containing Smc and ScpB that pull DNA away from mid-cell into both cell halves. This Mycoplasmopsis pulmonis (strain UAB CTIP) (Mycoplasma pulmonis) protein is Segregation and condensation protein A.